A 220-amino-acid polypeptide reads, in one-letter code: Imidazoleglycerol-phosphate dehydratase (220 aa).

Substrate-binding positions include E14, 64–72 (HMIHALAKH), 90–94 (HHTTE), R116, and R138. Mn(2+) contacts are provided by H64, H90, H91, and E94. Residues H162, H186, H187, and E190 each coordinate Mn(2+). Substrate contacts are provided by residues 186–194 (HHRSESAFK) and 214–216 (STK).

Belongs to the imidazoleglycerol-phosphate dehydratase family. Mn(2+) serves as cofactor.

The catalysed reaction is D-erythro-1-(imidazol-4-yl)glycerol 3-phosphate = 3-(imidazol-4-yl)-2-oxopropyl phosphate + H2O. The protein operates within amino-acid biosynthesis; L-histidine biosynthesis; L-histidine from 5-phospho-alpha-D-ribose 1-diphosphate: step 6/9. The chain is Imidazoleglycerol-phosphate dehydratase from Saccharomyces cerevisiae (strain ATCC 204508 / S288c) (Baker's yeast).